The sequence spans 178 residues: PRA1 family protein 2 (178 aa).

At 1 to 41 (MSEVRLPPLRALDDFVLGSARLAAPDPCDPQRWCHRVINNL) the chain is on the cytoplasmic side. Residues 42–62 (LYYQTNYLLCFGIGLALAGYV) form a helical membrane-spanning segment. Topologically, residues 63–64 (RP) are extracellular. Residues 65–85 (LHTLLSALVVAVALGMLVWAA) traverse the membrane as a helical segment. Residues 86-96 (ETRAAVRRCRR) lie on the Cytoplasmic side of the membrane. A helical membrane pass occupies residues 97-119 (SHPAACLAAVLAVGLLVLWVVGG). Topologically, residues 120-122 (ACT) are extracellular. A helical membrane pass occupies residues 123–140 (FLLSIAGPVLLILVHASL). At 141 to 178 (RLRNLKNKIENKIESIGLKRTPMGLLLEALGQEQEAGS) the chain is on the cytoplasmic side.

It belongs to the PRA1 family. In terms of assembly, interacts with CCR5 and GDE1.

The protein localises to the endosome membrane. Functionally, may be involved in ER/Golgi transport and vesicular traffic. Plays a proapoptotic role in cerulenin-induced neuroblastoma apoptosis. The protein is PRA1 family protein 2 (PRAF2) of Macaca fascicularis (Crab-eating macaque).